The primary structure comprises 144 residues: D-aminoacyl-tRNA deacylase (144 aa).

A Gly-cisPro motif, important for rejection of L-amino acids motif is present at residues 136–137 (GP).

It belongs to the DTD family. In terms of assembly, homodimer.

The protein localises to the cytoplasm. It carries out the reaction glycyl-tRNA(Ala) + H2O = tRNA(Ala) + glycine + H(+). It catalyses the reaction a D-aminoacyl-tRNA + H2O = a tRNA + a D-alpha-amino acid + H(+). Its function is as follows. An aminoacyl-tRNA editing enzyme that deacylates mischarged D-aminoacyl-tRNAs. Also deacylates mischarged glycyl-tRNA(Ala), protecting cells against glycine mischarging by AlaRS. Acts via tRNA-based rather than protein-based catalysis; rejects L-amino acids rather than detecting D-amino acids in the active site. By recycling D-aminoacyl-tRNA to D-amino acids and free tRNA molecules, this enzyme counteracts the toxicity associated with the formation of D-aminoacyl-tRNA entities in vivo and helps enforce protein L-homochirality. The sequence is that of D-aminoacyl-tRNA deacylase from Vibrio vulnificus (strain CMCP6).